Here is a 315-residue protein sequence, read N- to C-terminus: CID domain-containing protein 1 (315 aa).

The region spanning 1-135 (MADFTEQTLR…RLHEVHQQVK (135 aa)) is the CID domain. Positions 227–273 (MLEEYVKRLKNETNERETLESNLNMLIENVRMSIEHHEKLCREVKRR) form a coiled coil.

This is CID domain-containing protein 1 (cids-1) from Caenorhabditis elegans.